The sequence spans 349 residues: Mitogen-activated protein kinase sty1 (349 aa).

The Protein kinase domain maps to 20 to 299 (YSDLQPIGMG…AADALAHNYL (280 aa)). ATP is bound by residues 26–34 (IGMGAFGLV) and K49. D141 functions as the Proton acceptor in the catalytic mechanism. Residue T171 is modified to Phosphothreonine. The short motif at 171–173 (TGY) is the TXY element. The residue at position 173 (Y173) is a Phosphotyrosine. At S175 the chain carries Phosphoserine. At T176 the chain carries Phosphothreonine. A TXY motif is present at residues 176-178 (TRY).

Belongs to the protein kinase superfamily. Ser/Thr protein kinase family. MAP kinase subfamily. HOG1 sub-subfamily. In terms of assembly, interacts with cdc37, cmk2, hal4, sin1 and srk1. The cofactor is Mg(2+). Dually phosphorylated on Thr-171 and Tyr-173, which activates the enzyme. Phosphorylated by wis1 in response to osmotic stress, nutrient limitation, hydrogen peroxide and arsenite. Dephosphorylated by pyp1 and pyp2.

The protein localises to the cytoplasm. It localises to the nucleus. The catalysed reaction is L-seryl-[protein] + ATP = O-phospho-L-seryl-[protein] + ADP + H(+). It catalyses the reaction L-threonyl-[protein] + ATP = O-phospho-L-threonyl-[protein] + ADP + H(+). With respect to regulation, activated by the MAPK kinase wisl, and negatively regulated by pypl and pyp2 tyrosine phosphatases. Functionally, proline-directed serine/threonine-protein kinase involved in a signal transduction pathway that is activated by changes in the osmolarity of the extracellular environment. Controls osmotic regulation of transcription of target genes. Involved in osmoregulation and stress response pathways leading to an efficient start of sexual differentiation. Supports translation initiation and facilitates adaptation to environmental stress in part through reducing eIF2-alpha phosphorylation. Links the cell-cycle G2/M control with changes in the extracellular environment that affect cell physiology. Phosphorylates atf1 and mkp1. In conjunction with hal4, has a role in the cellular resistance to toxic cations such as Na(+), Li(+) and Ca(2+). Involved in resistance to arsenite, methylglyoxal and hydrogen peroxide. Involved in induction of thermotolerance in mRNA export, as well as in vacuolar fission. The chain is Mitogen-activated protein kinase sty1 (sty1) from Schizosaccharomyces pombe (strain 972 / ATCC 24843) (Fission yeast).